Consider the following 509-residue polypeptide: Protein disulfide-isomerase (509 aa).

A signal peptide spans 1–19 (MLSRALLCLALAWAARVGA). Positions 20–136 (DALEEEDNVL…IVNWLKKRTG (117 aa)) constitute a Thioredoxin 1 domain. Residues C55 and C58 each act as nucleophile in the active site. A disulfide bridge links C55 with C58. K202 is modified (N6-acetyllysine). N6-succinyllysine is present on residues K224 and K273. Phosphoserine occurs at positions 333 and 359. The 143-residue stretch at 335-477 (ELTAEKITQF…FKKFLESGGQ (143 aa)) folds into the Thioredoxin 2 domain. Active-site nucleophile residues include C399 and C402. C399 and C402 are oxidised to a cystine. Phosphoserine is present on S429. A Prevents secretion from ER motif is present at residues 506-509 (KDEL).

It belongs to the protein disulfide isomerase family. As to quaternary structure, heterodimer; heterodimerizes with the protein microsomal triglyceride transfer MTTP. Homodimer. Monomers and homotetramers may also occur. Interacts with P4HA2, forming a heterotetramer consisting of 2 alpha subunits (P4HA2) and 2 beta (P4HB), where P4HB plays the role of a structural subunit; this tetramer catalyzes the formation of 4-hydroxyproline in collagen. Also constitutes the structural subunit of the microsomal triacylglycerol transfer protein MTTP in mammalian cells. Stabilizes both enzymes and retain them in the ER without contributing to the catalytic activity. Binds UBQLN1. Interacts with ERO1B. Interacts with ILDR2. Interacts with ERN1/IRE1A (via N-terminus); the interaction is enhanced by phosphorylation of P4HB by FAM20C in response to endoplasmic reticulum stress and results in attenuation of ERN1 activity. Phosphorylation of Ser-359 by FAM20C is induced by endoplasmic reticulum stress and results in a functional switch from oxidoreductase to molecular chaperone. It also promotes interaction with ERN1.

It localises to the endoplasmic reticulum. Its subcellular location is the endoplasmic reticulum lumen. The protein localises to the melanosome. It is found in the cell membrane. The catalysed reaction is Catalyzes the rearrangement of -S-S- bonds in proteins.. This multifunctional protein catalyzes the formation, breakage and rearrangement of disulfide bonds. At the cell surface, seems to act as a reductase that cleaves disulfide bonds of proteins attached to the cell. May therefore cause structural modifications of exofacial proteins. Inside the cell, seems to form/rearrange disulfide bonds of nascent proteins. At high concentrations and following phosphorylation by FAM20C, functions as a chaperone that inhibits aggregation of misfolded proteins. At low concentrations, facilitates aggregation (anti-chaperone activity). May be involved with other chaperones in the structural modification of the TG precursor in hormone biogenesis. Also acts as a structural subunit of various enzymes such as prolyl 4-hydroxylase and microsomal triacylglycerol transfer protein MTTP. Receptor for LGALS9; the interaction retains P4HB at the cell surface of Th2 T helper cells, increasing disulfide reductase activity at the plasma membrane, altering the plasma membrane redox state and enhancing cell migration. The polypeptide is Protein disulfide-isomerase (P4hb) (Rattus norvegicus (Rat)).